The sequence spans 321 residues: Transcription factor ATOH8 (321 aa).

2 disordered regions span residues 59–193 (GLRD…SSYS) and 203–222 (HQDS…AASS). Residues 70 to 85 (VPVPVPVPVPVAPAVP) are compositionally biased toward pro residues. Residues 93 to 109 (AGERGGSRAPEVSDARK) are compositionally biased toward basic and acidic residues. Residues 121–132 (LPTPPPPPPPAP) show a composition bias toward pro residues. Low complexity predominate over residues 133–143 (QSQAPGGPEAQ). Pro residues predominate over residues 160-186 (PARPAPSAPPAPPAPPESTVRPAPPTR). The interval 230–243 (TRRLLANARERTRV) is basic motif; degenerate. A bHLH domain is found at 230-282 (TRRLLANARERTRVHTISAAFEALRKQVPCYSYGQKLSKLAILRIACNYILSL). A helix-loop-helix motif region spans residues 244-282 (HTISAAFEALRKQVPCYSYGQKLSKLAILRIACNYILSL).

In terms of assembly, efficient DNA binding requires dimerization with another bHLH protein. Interacts with NEUROG3 and NEUROD1. Interacts with ZFPM2; mediates indirect interaction with GATA4. Forms a heterodimer with TCF3; repress transcription of TCF3 and TCF3/NEUROG3 dimer-induced transactivation of E box-dependent promoters. Expressed in lung, liver, kidney, heart and pancreas. Expressed in endothel of umbilical vessels.

Its subcellular location is the nucleus. It is found in the nucleus speckle. The protein resides in the cytoplasm. In terms of biological role, transcription factor that binds a palindromic (canonical) core consensus DNA sequence 5'-CANNTG- 3' known as an E-box element, possibly as a heterodimer with other bHLH proteins. Regulates endothelial cell proliferation, migration and tube-like structures formation. Modulates endothelial cell differentiation through NOS3. May be implicated in specification and differentiation of neuronal cell lineages in the brain. May participate in kidney development and may be involved in podocyte differentiation. During early embryonic development is involved in tissue-specific differentiation processes that are dependent on class II bHLH factors and namely modulates the differentiation program initiated by the pro-endocrine factor NEUROG3. During myogenesis, may play a role during the transition of myoblasts from the proliferative phase to the differentiation phase. Positively regulates HAMP transcription in two ways, firstly by acting directly on the HAMP promoter via E-boxes binding and indirectly through increased phosphorylation of SMAD protein complex. Repress NEUROG3-dependent gene activation in a gene-specific manner through at least two mechanisms; requires only either the sequestering of a general partner such as TCF3 through heterodimerization, either also requires binding of the bHLH domain to DNA via a basic motif. This is Transcription factor ATOH8 from Homo sapiens (Human).